A 246-amino-acid chain; its full sequence is Ribonuclease 3 (246 aa).

The RNase III domain maps to 20-145; sequence FSKLEKILGF…FVGAIYLDRG (126 aa). Residue E62 coordinates Mg(2+). D66 is an active-site residue. Positions 131 and 134 each coordinate Mg(2+). The active site involves E134. One can recognise a DRBM domain in the interval 173–241; it reads SYKSLLIEWC…SKRGYFVFQS (69 aa).

It belongs to the ribonuclease III family. Homodimer. It depends on Mg(2+) as a cofactor.

It localises to the cytoplasm. It catalyses the reaction Endonucleolytic cleavage to 5'-phosphomonoester.. In terms of biological role, digests double-stranded RNA. Involved in the processing of primary rRNA transcript to yield the immediate precursors to the large and small rRNAs (23S and 16S). Processes some mRNAs, and tRNAs when they are encoded in the rRNA operon. Processes pre-crRNA and tracrRNA of type II CRISPR loci if present in the organism. This is Ribonuclease 3 from Flavobacterium psychrophilum (strain ATCC 49511 / DSM 21280 / CIP 103535 / JIP02/86).